The following is a 550-amino-acid chain: Hydroxylamine reductase (550 aa).

[2Fe-2S] cluster contacts are provided by cysteine 3, cysteine 6, cysteine 18, and cysteine 25. Histidine 249, glutamate 273, cysteine 317, cysteine 405, cysteine 433, cysteine 458, glutamate 492, and lysine 494 together coordinate hybrid [4Fe-2O-2S] cluster. Cysteine 405 carries the post-translational modification Cysteine persulfide.

This sequence belongs to the HCP family. The cofactor is [2Fe-2S] cluster. It depends on hybrid [4Fe-2O-2S] cluster as a cofactor.

The protein localises to the cytoplasm. It carries out the reaction A + NH4(+) + H2O = hydroxylamine + AH2 + H(+). Its function is as follows. Catalyzes the reduction of hydroxylamine to form NH(3) and H(2)O. The chain is Hydroxylamine reductase from Escherichia coli O17:K52:H18 (strain UMN026 / ExPEC).